Reading from the N-terminus, the 156-residue chain is ATP synthase subunit b (156 aa).

The chain crosses the membrane as a helical span at residues 7–27; the sequence is LFVQAIVFLILVLFTMKFVWP.

The protein belongs to the ATPase B chain family. F-type ATPases have 2 components, F(1) - the catalytic core - and F(0) - the membrane proton channel. F(1) has five subunits: alpha(3), beta(3), gamma(1), delta(1), epsilon(1). F(0) has three main subunits: a(1), b(2) and c(10-14). The alpha and beta chains form an alternating ring which encloses part of the gamma chain. F(1) is attached to F(0) by a central stalk formed by the gamma and epsilon chains, while a peripheral stalk is formed by the delta and b chains.

It is found in the cell inner membrane. Functionally, f(1)F(0) ATP synthase produces ATP from ADP in the presence of a proton or sodium gradient. F-type ATPases consist of two structural domains, F(1) containing the extramembraneous catalytic core and F(0) containing the membrane proton channel, linked together by a central stalk and a peripheral stalk. During catalysis, ATP synthesis in the catalytic domain of F(1) is coupled via a rotary mechanism of the central stalk subunits to proton translocation. Its function is as follows. Component of the F(0) channel, it forms part of the peripheral stalk, linking F(1) to F(0). This is ATP synthase subunit b from Delftia acidovorans (strain DSM 14801 / SPH-1).